The chain runs to 337 residues: Cytoskeleton protein RodZ (337 aa).

At 1 to 111 (MNTEATHDQN…LGKRRKKRDG (111 aa)) the chain is on the cytoplasmic side. The region spanning 19–71 (LRNAREQLGLSQQAVAERLCLKVSTVRDIEEDKAPADLASTFLRGYIRSYARL) is the HTH cro/C1-type domain. Residues 30-49 (QQAVAERLCLKVSTVRDIEE) constitute a DNA-binding region (H-T-H motif). The helical; Signal-anchor for type II membrane protein transmembrane segment at 112–132 (WLMTFTWLVLFVVIGLSGAWW) threads the bilayer. At 133–337 (WQDHKAQQEE…TLNAEQSPAQ (205 aa)) the chain is on the periplasmic side. The span at 145–167 (TMADQSSAELSSNSEQGQSVPLN) shows a compositional bias: polar residues. Residues 145 to 236 (TMADQSSAEL…TAATTPDGAA (92 aa)) are disordered. A compositionally biased stretch (low complexity) spans 168–207 (TSTTTDPATTSTPPASVDTTATNTQTPAVTAPAPAVDPQQ). Residues 208 to 218 (NAVVSPSQANV) show a composition bias toward polar residues. The span at 219–236 (DTAATPAPTAATTPDGAA) shows a compositional bias: low complexity.

Belongs to the RodZ family.

It localises to the cell inner membrane. Its function is as follows. Cytoskeletal protein that is involved in cell-shape control through regulation of the length of the long axis. The protein is Cytoskeleton protein RodZ of Escherichia coli O139:H28 (strain E24377A / ETEC).